Consider the following 398-residue polypeptide: Substance-K receptor (398 aa).

Topologically, residues 1-32 are extracellular; that stretch reads MGTCDIVTEANISSGPESNTTGITAFSMPSWQ. N-linked (GlcNAc...) asparagine glycosylation is found at N11 and N19. Residues 33 to 56 traverse the membrane as a helical segment; that stretch reads LALWATAYLALVLVAVTGNAIVIW. Topologically, residues 57–69 are cytoplasmic; the sequence is IILAHRRMRTVTN. The helical transmembrane segment at 70–90 threads the bilayer; the sequence is YFIVNLALADLCMAAFNAAFN. Residues 91–107 are Extracellular-facing; that stretch reads FVYASHNIWYFGRAFCY. A disulfide bond links C106 and C181. Residues 108–129 traverse the membrane as a helical segment; sequence FQNLFPITAMFVSIYSMTAIAA. At 130–149 the chain is on the cytoplasmic side; it reads DRYMAIVHPFQPRLSAPSTK. A helical membrane pass occupies residues 150-170; the sequence is AVIAGIWLVALALASPQCFYS. At 171 to 196 the chain is on the extracellular side; that stretch reads TVTMDQGATKCVVAWPEDSGGKTLLL. A helical membrane pass occupies residues 197–218; the sequence is YHLVVIALIYFLPLAVMFVAYS. Residues 219–251 lie on the Cytoplasmic side of the membrane; sequence VIGLTLWRRAVPGHQAHGANLRHLQAMKKFVKT. The chain crosses the membrane as a helical span at residues 252 to 272; it reads MVLVVLTFAICWLPYHLYFIL. Topologically, residues 273-290 are extracellular; that stretch reads GSFQEDIYCHKFIQQVYL. Residues 291–310 traverse the membrane as a helical segment; the sequence is ALFWLAMSSTMYNPIIYCCL. Residues 311-398 lie on the Cytoplasmic side of the membrane; it reads NHRFRSGFRL…LAPTKTHVEI (88 aa). C324 carries the S-palmitoyl cysteine lipid modification.

This sequence belongs to the G-protein coupled receptor 1 family.

It is found in the cell membrane. Functionally, this is a receptor for the tachykinin neuropeptide substance K (neurokinin A). It is associated with G proteins that activate a phosphatidylinositol-calcium second messenger system. The rank order of affinity of this receptor to tachykinins is: substance K &gt; neuromedin-K &gt; substance P. The polypeptide is Substance-K receptor (TACR2) (Homo sapiens (Human)).